Reading from the N-terminus, the 96-residue chain is Small ribosomal subunit protein bS6 (96 aa).

It belongs to the bacterial ribosomal protein bS6 family.

In terms of biological role, binds together with bS18 to 16S ribosomal RNA. The protein is Small ribosomal subunit protein bS6 of Streptococcus suis (strain 98HAH33).